The primary structure comprises 501 residues: L-lysine transport protein (501 aa).

13 helical membrane passes run 25–41, 52–76, 92–113, 138–155, 174–191, 214–232, 247–269, 292–316, 340–362, 377–393, 424–440, 447–463, and 477–495; these read LIAL…IFSI, GAML…HVLA, VGLG…SVIA, FVSA…FGVV, ILPL…GFSW, GIMV…ASVY, VIGF…GVLT, WGAA…QMLC, GAAW…IFFL, LYLV…VMLA, LIVG…LFYA, LFGA…YVWT, and IGVV…IGLV.

The protein belongs to the amino acid-polyamine-organocation (APC) superfamily. Basic amino acid/polyamine antiporter (APA) (TC 2.A.3.2) family.

The protein resides in the cell membrane. Functionally, permease that is involved in the transport across the membrane of lysine. The chain is L-lysine transport protein (lysI) from Corynebacterium glutamicum (strain ATCC 13032 / DSM 20300 / JCM 1318 / BCRC 11384 / CCUG 27702 / LMG 3730 / NBRC 12168 / NCIMB 10025 / NRRL B-2784 / 534).